Consider the following 216-residue polypeptide: Adenylate kinase (216 aa).

10–15 (GAGKGT) serves as a coordination point for ATP. The tract at residues 30–59 (STGDIFRKNISENTPLGIEAKSYMDNGQLV) is NMP. AMP is bound by residues Thr-31, Arg-36, 57–59 (QLV), 85–88 (GFPR), and Gln-92. Residues 126–163 (GRRVCPSCGASYHIKFNPPTNDGKCDLCGSDVIQRKDD) form an LID region. Arg-127 is an ATP binding site. Residues Cys-130 and Cys-133 each coordinate Zn(2+). Residue 136–137 (SY) coordinates ATP. 2 residues coordinate Zn(2+): Cys-150 and Cys-153. AMP is bound by residues Arg-160 and Arg-171. ATP is bound at residue Gln-199.

Belongs to the adenylate kinase family. In terms of assembly, monomer.

The protein localises to the cytoplasm. The catalysed reaction is AMP + ATP = 2 ADP. Its pathway is purine metabolism; AMP biosynthesis via salvage pathway; AMP from ADP: step 1/1. In terms of biological role, catalyzes the reversible transfer of the terminal phosphate group between ATP and AMP. Plays an important role in cellular energy homeostasis and in adenine nucleotide metabolism. In Clostridium perfringens (strain ATCC 13124 / DSM 756 / JCM 1290 / NCIMB 6125 / NCTC 8237 / Type A), this protein is Adenylate kinase.